We begin with the raw amino-acid sequence, 192 residues long: Sarcoplasmic calcium-binding protein 1 (192 aa).

A1 is modified (N-acetylalanine). EF-hand domains are found at residues 4 to 39, 56 to 91, 100 to 135, and 136 to 171; these read WDNR…NTLI, IMSN…VCVG, AFKV…RSAF, and ANIK…YAQF. Residues D17, D19, N21, D28, D69, N71, D73, E75, E80, D113, N115, D117, and E124 each coordinate Ca(2+).

In terms of assembly, SCPs from crayfish, lobster, and shrimp are polymorphic dimers.

Functionally, like parvalbumins, SCPs seem to be more abundant in fast contracting muscles, but no functional relationship can be established from this distribution. The protein is Sarcoplasmic calcium-binding protein 1 of Astacus leptodactylus (Turkish narrow-clawed crayfish).